Consider the following 217-residue polypeptide: uncharacterized protein (217 aa).

Transmembrane regions (helical) follow at residues 13–35 (IWLT…IALL), 50–68 (FSLV…ILYL), 75–94 (FLLA…EWRI), 109–131 (MMAL…LFSL), 152–174 (YLAI…AAAV), and 194–216 (GFSL…FAGL).

The protein localises to the cell membrane. This is an uncharacterized protein from Archaeoglobus fulgidus (strain ATCC 49558 / DSM 4304 / JCM 9628 / NBRC 100126 / VC-16).